Consider the following 89-residue polypeptide: Large ribosomal subunit protein eL34 (89 aa).

Residues 1 to 22 form a disordered region; the sequence is MPAPRYKSGSSKKVYRKAPGNS.

Belongs to the eukaryotic ribosomal protein eL34 family.

This Methanococcus maripaludis (strain C7 / ATCC BAA-1331) protein is Large ribosomal subunit protein eL34.